Reading from the N-terminus, the 283-residue chain is Thymidylate synthase (283 aa).

R22 contacts dUMP. Catalysis depends on C160, which acts as the Nucleophile. Residues 180 to 183 (RSCD), N191, and 221 to 223 (HIY) each bind dUMP. D183 contributes to the (6R)-5,10-methylene-5,6,7,8-tetrahydrofolate binding site. S282 serves as a coordination point for (6R)-5,10-methylene-5,6,7,8-tetrahydrofolate.

This sequence belongs to the thymidylate synthase family. Bacterial-type ThyA subfamily. Homodimer.

Its subcellular location is the cytoplasm. It carries out the reaction dUMP + (6R)-5,10-methylene-5,6,7,8-tetrahydrofolate = 7,8-dihydrofolate + dTMP. The protein operates within pyrimidine metabolism; dTTP biosynthesis. Functionally, catalyzes the reductive methylation of 2'-deoxyuridine-5'-monophosphate (dUMP) to 2'-deoxythymidine-5'-monophosphate (dTMP) while utilizing 5,10-methylenetetrahydrofolate (mTHF) as the methyl donor and reductant in the reaction, yielding dihydrofolate (DHF) as a by-product. This enzymatic reaction provides an intracellular de novo source of dTMP, an essential precursor for DNA biosynthesis. The protein is Thymidylate synthase of Haemophilus influenzae (strain PittEE).